The sequence spans 359 residues: Photosystem II protein D1 3 (359 aa).

3 helical membrane-spanning segments follow: residues tyrosine 29–isoleucine 46, histidine 118–leucine 133, and tryptophan 142–alanine 156. Chlorophyll a is bound at residue histidine 118. Tyrosine 126 contributes to the pheophytin a binding site. [CaMn4O5] cluster contacts are provided by aspartate 170 and glutamate 189. Residues phenylalanine 197–leucine 218 form a helical membrane-spanning segment. Histidine 198 serves as a coordination point for chlorophyll a. Residues histidine 215 and serine 264–phenylalanine 265 each bind a quinone. Histidine 215 is a Fe cation binding site. Residue histidine 272 participates in Fe cation binding. The chain crosses the membrane as a helical span at residues phenylalanine 274–leucine 288. [CaMn4O5] cluster-binding residues include histidine 332, glutamate 333, aspartate 342, and alanine 344. Residues alanine 345 to glycine 359 constitute a propeptide that is removed on maturation.

This sequence belongs to the reaction center PufL/M/PsbA/D family. PSII is composed of 1 copy each of membrane proteins PsbA, PsbB, PsbC, PsbD, PsbE, PsbF, PsbH, PsbI, PsbJ, PsbK, PsbL, PsbM, PsbT, PsbX, PsbY, PsbZ, Psb30/Ycf12, peripheral proteins PsbO, CyanoQ (PsbQ), PsbU, PsbV and a large number of cofactors. It forms dimeric complexes. Requires The D1/D2 heterodimer binds P680, chlorophylls that are the primary electron donor of PSII, and subsequent electron acceptors. It shares a non-heme iron and each subunit binds pheophytin, quinone, additional chlorophylls, carotenoids and lipids. D1 provides most of the ligands for the Mn4-Ca-O5 cluster of the oxygen-evolving complex (OEC). There is also a Cl(-1) ion associated with D1 and D2, which is required for oxygen evolution. The PSII complex binds additional chlorophylls, carotenoids and specific lipids. as cofactor. Post-translationally, tyr-161 forms a radical intermediate that is referred to as redox-active TyrZ, YZ or Y-Z. In terms of processing, C-terminally processed by CtpA; processing is essential to allow assembly of the oxygen-evolving complex and thus photosynthetic growth.

Its subcellular location is the cellular thylakoid membrane. The catalysed reaction is 2 a plastoquinone + 4 hnu + 2 H2O = 2 a plastoquinol + O2. Functionally, photosystem II (PSII) is a light-driven water:plastoquinone oxidoreductase that uses light energy to abstract electrons from H(2)O, generating O(2) and a proton gradient subsequently used for ATP formation. It consists of a core antenna complex that captures photons, and an electron transfer chain that converts photonic excitation into a charge separation. The D1/D2 (PsbA/PsbD) reaction center heterodimer binds P680, the primary electron donor of PSII as well as several subsequent electron acceptors. The sequence is that of Photosystem II protein D1 3 from Parasynechococcus marenigrum (strain WH8102).